The primary structure comprises 905 residues: Dopamine D2-like receptor (905 aa).

Residues 1–23 (MLSPFDWRRGISSSGTGGTMAAQ) are disordered. Topologically, residues 1–377 (MLSPFDWRRG…GELRVVDHNY (377 aa)) are extracellular. 8 N-linked (GlcNAc...) asparagine glycosylation sites follow: N88, N146, N156, N166, N174, N257, N314, and N343. A helical membrane pass occupies residues 378–398 (WALILILFPILTLFGNILVIL). Topologically, residues 399-416 (SVCRERSLQTVTNYFIVS) are cytoplasmic. A helical membrane pass occupies residues 417-437 (LAIADLLVAVVVMPFAVYFLV). The Extracellular portion of the chain corresponds to 438 to 450 (NGAWALPDVVCDF). C448 and C525 are disulfide-bonded. The chain crosses the membrane as a helical span at residues 451-471 (YIAMDVICSTSSIFNLVAISI). Residues 472–493 (DRYIAVTQPIKYAKHKNSRRVC) are Cytoplasmic-facing. A helical transmembrane segment spans residues 494-514 (LTILLVWAISAAIGSPIVLGL). At 515 to 531 (NNTPNREPDVCAFYNAD) the chain is on the extracellular side. The helical transmembrane segment at 532–552 (FILYSSLSSFYIPCIIMVFLY) threads the bilayer. Residues 553–830 (WNIFKALRSR…AKKERKATKT (278 aa)) are Cytoplasmic-facing. Disordered regions lie at residues 600-631 (SRHA…ISPD), 702-753 (ATSA…SVGV), and 780-799 (DSTL…KNSQ). Low complexity predominate over residues 702-722 (ATSAAPRSSGSPPDSPLPSGA). Residues 723–734 (TLQRSSVSSQRR) show a composition bias toward polar residues. Positions 735-746 (PTGDDSPKRGEP) are enriched in basic and acidic residues. Residues 831-851 (LAIVLGVFLFCWLPFFSCNIM) form a helical membrane-spanning segment. Residues 852-869 (DAMCAKFKKDCRPGLTAY) lie on the Extracellular side of the membrane. Residues 870–890 (MMTTWLGYINSFVNPVIYTIF) traverse the membrane as a helical segment. Residues 891–905 (NPEFRKAFKKIMHMG) are Cytoplasmic-facing.

It belongs to the G-protein coupled receptor 1 family. As to expression, highest expression is in adult heads.

It localises to the cell membrane. Its function is as follows. Receptor for dopamine. The activity of this receptor is mediated by G proteins which inhibit adenylyl cyclase. This Drosophila melanogaster (Fruit fly) protein is Dopamine D2-like receptor.